Reading from the N-terminus, the 335-residue chain is Anthranilate phosphoribosyltransferase (335 aa).

Residues Gly79, 82–83, Ser87, 89–92, 107–115, and Ser119 contribute to the 5-phospho-alpha-D-ribose 1-diphosphate site; these read GD, NIST, and KHGNRSITS. Gly79 is a binding site for anthranilate. Ser91 contributes to the Mg(2+) binding site. Anthranilate is bound at residue Asn110. Arg165 contacts anthranilate. Positions 224 and 225 each coordinate Mg(2+).

This sequence belongs to the anthranilate phosphoribosyltransferase family. Homodimer. Mg(2+) serves as cofactor.

The enzyme catalyses N-(5-phospho-beta-D-ribosyl)anthranilate + diphosphate = 5-phospho-alpha-D-ribose 1-diphosphate + anthranilate. Its pathway is amino-acid biosynthesis; L-tryptophan biosynthesis; L-tryptophan from chorismate: step 2/5. Functionally, catalyzes the transfer of the phosphoribosyl group of 5-phosphorylribose-1-pyrophosphate (PRPP) to anthranilate to yield N-(5'-phosphoribosyl)-anthranilate (PRA). The sequence is that of Anthranilate phosphoribosyltransferase from Lactococcus lactis subsp. lactis (strain IL1403) (Streptococcus lactis).